Here is a 1614-residue protein sequence, read N- to C-terminus: Protein scribble homolog (1614 aa).

Positions 1-809 (MLKCIPLWRC…MRLWRERMVE (809 aa)) are sufficient for targeting to adherens junction and to inhibit cell proliferation. 17 LRR repeats span residues 11–34 (NRHV…IYRY), 35–58 (SRSL…FFRL), 59–81 (LNLR…VANF), 83–105 (QLVE…KFCK), 107–127 (LEIA…FTQL), 128–150 (RSLA…VGNL), 151–173 (ANLV…LSFL), 174–196 (VKLE…LGAL), 197–219 (PNLR…LGNL), 221–242 (RLVC…LGGL), 243–265 (LLLT…IGQL), 267–288 (QLSI…IGDC), 289–311 (ENLS…LGKL), 312–334 (TKLT…IGGC), 336–357 (ALSV…LAHT), 359–380 (ELHV…LTHL), and 382–405 (LKAL…DDAQ). Phosphoserine is present on Ser37. A Phosphothreonine modification is found at Thr378. 3 disordered regions span residues 417 to 441 (PQQP…SDAP), 462 to 608 (GAAA…RLIR), and 636 to 692 (AQPD…VVSA). Positions 428 to 437 (GLQSSPSESW) are enriched in polar residues. The residue at position 475 (Thr475) is a Phosphothreonine. Over residues 479-494 (SELKVMKRGVEERRGE) the composition is skewed to basic and acidic residues. A compositionally biased stretch (polar residues) spans 516–533 (TESGLSEDSQPSTGTASQ). Positions 548 to 557 (QQEAAPNAQE) are enriched in low complexity. Over residues 662–686 (EEEDEEDEEEDEEEEEVAVAEEDKE) the composition is skewed to acidic residues. A coiled-coil region spans residues 664–691 (EDEEDEEEDEEEEEVAVAEEDKEEAVVS). A phosphoserine mark is found at Ser699 and Ser755. Residues 708 to 1219 (IEPARIEEEE…SLESVSSIDR (512 aa)) are interaction with ARHGEF7. In terms of domain architecture, PDZ 1 spans 719-806 (TLTIVRQTGG…TVQMRLWRER (88 aa)). Residues 719–1184 (TLTIVRQTGG…TVLVCDGFDT (466 aa)) are required for interaction with VIM. Position 817 is a phosphothreonine (Thr817). Ser826, Ser866, and Ser930 each carry phosphoserine. A PDZ 2 domain is found at 853–941 (VACLVRSEKG…TIALLLEREA (89 aa)). Residues 940–971 (EAGGPLPPSPLPHSPPPPVTAPSTVVTASPGE) are disordered. A compositionally biased stretch (pro residues) spans 944-959 (PLPPSPLPHSPPPPVT). Low complexity predominate over residues 960–969 (APSTVVTASP). 2 PDZ domains span residues 994–1083 (EICL…RRDP) and 1090–1178 (ELCI…TVLV). Phosphoserine is present on residues Ser1130, Ser1210, Ser1213, Ser1216, Ser1222, Ser1260, Ser1268, and Ser1271. The disordered stretch occupies residues 1214-1448 (VSSIDRELSP…LPDRALSPAE (235 aa)). Basic and acidic residues predominate over residues 1217–1232 (IDRELSPEGCGKEKEP). Phosphothreonine is present on Thr1304. Ser1310 is modified (phosphoserine). Residues 1315–1327 (SFRERQKYFELEV) show a composition bias toward basic and acidic residues. The residue at position 1340 (Ser1340) is a Phosphoserine. Positions 1341-1368 (LVGADDLRKMQEEEARKLQQKRAQLMRE) form a coiled coil. Residues 1345 to 1357 (DDLRKMQEEEARK) are compositionally biased toward basic and acidic residues. A compositionally biased stretch (acidic residues) spans 1378–1390 (LDGEAPDDEEPEE). Positions 1396 to 1408 (GPAAGLSPSSPQP) are enriched in low complexity. Phosphoserine occurs at positions 1402 and 1405. Positions 1418–1429 (AKAERRHQERLR) are enriched in basic and acidic residues. Residues Ser1432, Ser1445, and Ser1467 each carry the phosphoserine modification. The segment at 1476–1524 (QMVLSKSQEGRSRRGPLERLAEAPSPAPTPSPTPVEDLGLQTSTSPGRL) is disordered. A compositionally biased stretch (basic and acidic residues) spans 1483–1496 (QEGRSRRGPLERLA). Phosphoserine is present on Ser1500. Thr1504 bears the Phosphothreonine mark. Ser1506, Ser1520, and Ser1550 each carry phosphoserine. The disordered stretch occupies residues 1581-1614 (GRPSPGTVGPEEVTLCSSRRPVRPGRRGLGPVPS).

The protein belongs to the LAP (LRR and PDZ) protein family. As to quaternary structure, interacts with UBE3A. Interacts with PAK1 and PAK2. Interacts (via PDZ domains) with VANGL2. Interacts (via PDZ domains) with LPP and TRIP6; the interaction is direct. Interacts (via PDZ domains) with TJP2. Interacts (via PDZ domains) with APC; may mediate APC targeting to adherens junctions of epithelial cells. Interacts (via PDZ domains) with TSHR; regulates TSHR trafficking and function. Interacts with ARHGEF7 and GIT1; interacts directly with ARHGEF7. Interacts with CTNNB1. Interacts with MAPK12. Interacts (via PDZ domains 1 and 3) with MCC. Interacts with DLG5. Interacts with STK4/MST1 and LATS1 in the presence of DLG5. Interacts (via PDZ domain 3) with CRTAM (via PDZ-binding motif); the interaction promotes CRTAM and SCRIB polarization in a subset of CD4+ T-cells. Interacts with YES1, when YES1 is in a closed conformation; the interaction facilitates YES1 autophosphorylation. Interacts (via PDZ domains) with VIM; the interaction protects SCRIB from proteasomal degradation and facilitates SCRIB localization to intermediate filaments, the interaction is reduced by cell contact inhibition. Ubiquitinated; targeted for UBE3A-dependent multiubiquitination and degraded. Post-translationally, palmitoylated. Could be depalmitoylated by LYPLA1 and/or LYPLA2. Palmitoylation of SCRIB by ZDHHC7 is required for its localization to cell-cell junctions, function in the establishement of epithelial cell polarity and the regulation of downstream signaling pathways important for epithelial cell differentiation.

Its subcellular location is the cell membrane. It localises to the cell junction. It is found in the adherens junction. The protein localises to the cell projection. The protein resides in the lamellipodium. Its subcellular location is the cytoplasm. It localises to the postsynapse. It is found in the presynapse. Its function is as follows. Scaffold protein involved in different aspects of polarized cell differentiation regulating epithelial and neuronal morphogenesis and T-cell polarization. Via its interaction with CRTAM, required for the late phase polarization of a subset of CD4+ T-cells, which in turn regulates TCR-mediated proliferation and IFNG and IL22 production. Plays a role in cell directional movement, cell orientation, cell sheet organization and Golgi complex polarization at the cell migration front. Promotes epithelial cell layer barrier function via maintaining cell-cell adhesion. Most probably functions in the establishment of apico-basal cell polarity. May function in cell proliferation regulating progression from G1 to S phase and as a positive regulator of apoptosis for instance during acinar morphogenesis of the mammary epithelium. May regulate cell invasion via MAPK-mediated cell migration and adhesion. May play a role in exocytosis and in the targeting of synaptic vesicles to synapses. Functions as an activator of Rac GTPase activity. The sequence is that of Protein scribble homolog from Canis lupus familiaris (Dog).